Reading from the N-terminus, the 345-residue chain is S-adenosylmethionine:tRNA ribosyltransferase-isomerase (345 aa).

The protein belongs to the QueA family. Monomer.

It localises to the cytoplasm. The catalysed reaction is 7-aminomethyl-7-carbaguanosine(34) in tRNA + S-adenosyl-L-methionine = epoxyqueuosine(34) in tRNA + adenine + L-methionine + 2 H(+). Its pathway is tRNA modification; tRNA-queuosine biosynthesis. Functionally, transfers and isomerizes the ribose moiety from AdoMet to the 7-aminomethyl group of 7-deazaguanine (preQ1-tRNA) to give epoxyqueuosine (oQ-tRNA). The protein is S-adenosylmethionine:tRNA ribosyltransferase-isomerase of Acidiphilium cryptum (strain JF-5).